We begin with the raw amino-acid sequence, 401 residues long: Type I restriction enzyme EcoprrI specificity subunit (401 aa).

Belongs to the type-I restriction system S methylase family. In terms of assembly, the type I restriction/modification system is composed of three polypeptides R, M and S; the restriction enzyme has stoichiometry R(2)M(2)S(1) while the methyltransferase is M(2)S(1).

Its function is as follows. The specificity (S) subunit of a type I restriction enzyme; this subunit dictates DNA sequence specificity. The M and S subunits together form a methyltransferase (MTase) that methylates two adenine residues of the sequence 5'-CCAN(7)ATGC-3'. In the presence of the R subunit the complex can also act as an endonuclease, binding to the same target sequence but cutting the DNA some distance from this site. Whether the DNA is cut or modified depends on the methylation state of the target sequence. When the target site is unmodified, the DNA is cut. When the target site is hemimethylated, the complex acts as a maintenance MTase modifying the DNA so that both strands become methylated. After locating a non-methylated recognition site, the enzyme complex serves as a molecular motor that translocates DNA in an ATP-dependent manner until a collision occurs that triggers cleavage. This is Type I restriction enzyme EcoprrI specificity subunit (prrB) from Escherichia coli.